A 607-amino-acid polypeptide reads, in one-letter code: Rap1 GTPase-GDP dissociation stimulator 1-A (607 aa).

ARM repeat units follow at residues 79–118, 170–211, 347–390, 391–431, and 479–519; these read ELMR…NICY, DSLQ…NLAE, DGNC…NLAI, PVVN…MLID, and SKDV…LIAA.

Interacts with ralB. Probably interacts with the post-translationally isoprenylated (geranyl-geranylation) forms of ral proteins. Interacts with both GDP-bound and GTP-bound forms of ralA, but interaction is much stronger with ralA-GDP. As to expression, weakly expressed in adult tissues with highest levels found in spleen, kidney, skin and A6 cells.

The protein resides in the cytoplasm. Its subcellular location is the cytosol. The protein localises to the endoplasmic reticulum. It localises to the mitochondrion. Functionally, stimulates GDP/GTP exchange reaction of a group of small GTP-binding proteins (G proteins) including Rap1a/Rap1b, RhoA, RhoB and KRas, by stimulating the dissociation of GDP from and the subsequent binding of GTP to each small G protein. The polypeptide is Rap1 GTPase-GDP dissociation stimulator 1-A (rap1gds1-a) (Xenopus laevis (African clawed frog)).